Reading from the N-terminus, the 284-residue chain is Exosome complex component MTR3 (284 aa).

It belongs to the RNase PH family. In terms of assembly, component of the RNA exosome complex.

The protein localises to the cytoplasm. Its subcellular location is the nucleus. The protein resides in the nucleolus. Functionally, non-catalytic component of the RNA exosome complex which has 3'-&gt;5' exoribonuclease activity and participates in a multitude of cellular RNA processing and degradation events. The sequence is that of Exosome complex component MTR3 (MTR3) from Chaetomium thermophilum (strain DSM 1495 / CBS 144.50 / IMI 039719) (Thermochaetoides thermophila).